The sequence spans 580 residues: Frizzled and smoothened-like protein K (580 aa).

A signal peptide spans 1-18; that stretch reads MRVLFILFLFYFYTYTEA. At 19–236 the chain is on the extracellular side; it reads QQYYPIDPTG…QWDNIFDTSD (218 aa). Residues 25–154 enclose the FZ domain; it reads DPTGKCEQYI…SSDYNLTTYG (130 aa). Residues N52, N97, N149, N170, and N186 are each glycosylated (N-linked (GlcNAc...) asparagine). A helical transmembrane segment spans residues 237–257; it reads AISLVSLLCSVYLFITYMVIN. The Cytoplasmic segment spans residues 258–264; it reads PKRNKYD. The helical transmembrane segment at 265 to 285 threads the bilayer; the sequence is YFFSFFVLSIILMSIAGTIGF. Over 286-308 the chain is Extracellular; sequence SVGGTRKLLCPEINRRGVYTDPA. The chain crosses the membrane as a helical span at residues 309–329; sequence VAAAGWIFQFAIINAILWFSI. Over 330–349 the chain is Cytoplasmic; that stretch reads NSFELWFQIKFIKRKLHLIK. Residues 350–370 form a helical membrane-spanning segment; that stretch reads FYILAVLVISIALSVPLSAIG. At 371–391 the chain is on the extracellular side; that stretch reads EFNAGLGNFVVWIESGKYQNW. The helical transmembrane segment at 392–412 threads the bilayer; that stretch reads FFWGPLGIVLTVGTTFIGLVI. At 413–434 the chain is on the cytoplasmic side; that stretch reads WEIYKIVSSTNKSDFFKLQLKP. Residues 435 to 455 form a helical membrane-spanning segment; that stretch reads LMNMLLIYLTFVYLFGYNFYI. Residues 456-490 are Extracellular-facing; sequence HNSLNGFYGSSEEFKNCIISTDGKDCRIQGPPYSS. The helical transmembrane segment at 491-511 threads the bilayer; the sequence is ILMFVFCLRIYGVYCIALYGF. Topologically, residues 512–580 are cytoplasmic; that stretch reads SPKTRSIWSN…SMEPDEIILR (69 aa). Positions 514–519 match the Lys-Thr-X-X-X-Trp motif, mediates interaction with the PDZ domain of Dvl family members motif; it reads KTRSIW. Residues 542–580 form a disordered region; the sequence is TTKGGTSSTDIKMSTNNNSNMDSGGGKSSSMEPDEIILR. Residues 551-563 are compositionally biased toward polar residues; that stretch reads DIKMSTNNNSNMD.

The protein belongs to the G-protein coupled receptor Fz/Smo family.

It localises to the membrane. The sequence is that of Frizzled and smoothened-like protein K (fslK) from Dictyostelium discoideum (Social amoeba).